Reading from the N-terminus, the 607-residue chain is Autophagy-related protein 16-1 (607 aa).

Residues 13 to 43 (WKRHISEQLRRRDRLQRQAFEEIILQYNKLL) form an interaction with ATG5 region. Positions 79-230 (DSQLQEMAQL…QKELAEAAKE (152 aa)) form a coiled coil. The residue at position 139 (serine 139) is a Phosphoserine. The tract at residues 207 to 230 (AENEKDSRRRQARLQKELAEAAKE) is WIPI2-binding. An RB1CC1-binding region spans residues 230-242 (EPLPVEQDDDIEV). Residues serine 269 and serine 287 each carry the phosphoserine modification. Positions 296–299 (DNVD) match the Caspase cleavage motif. 7 WD repeats span residues 320-359 (AHDG…CEFK), 364-403 (GSNA…LRHT), 406-445 (GHSG…CIKT), 447-484 (FAGS…IVRE), 486-525 (ELLG…IKQT), 532-573 (KCGS…KVLS), and 575-607 (QHSS…WAQY).

It belongs to the WD repeat ATG16 family. Homodimer. Homooligomer. Heterooligomer with ATG16L2. Interacts with WIPI1. Interacts with WIPI2. Interacts with RB1CC1; the interaction is required for ULK1 complex-dependent autophagy. Interacts with ATG5. Part of the minor complex composed of 4 sets of ATG12-ATG5 and ATG16L1 (400 kDa); this complex interacts with ATG3 leading to disruption of ATG7 interaction and promotion of ATG8-like proteins lipidation. Part of the major complex composed of 8 sets of ATG12-ATG5 and ATG16L1 (800 kDa). Interacts with RAB33B (GTP- and GDP-bound forms); the complex consists of a tetramer where two RAB33B molecules bind independently one molecule of the ATG16L1 homodimer; the interaction promotes ATG12-ATG5-ATG16L1 complex recruitment to phagophores. Interacts (via WD repeats) with TMEM59; the interaction mediates unconventional autophagic activity of TMEM59. Interacts with TLR2. Interacts (via WD repeats) with MEFV. Interacts with PPP1CA; the interaction dephosphorylates ATG16L1 causing dissociation of ATG12-ATG5-ATG16L1 complex. Interacts (via N-terminal) with CLTC. Interacts with NOD1. Interacts with NOD2. Interacts with TUFM. Interacts with TRIM16. Interacts (via WD repeats) with SPATA33. Interacts with IRGM. In terms of processing, proteolytic cleavage by activated CASP3 leads to degradation and may regulate autophagy upon cellular stress and apoptotic stimuli. Phosphorylation at Ser-139 promotes association with the ATG12-ATG5 conjugate to form the ATG12-ATG5-ATG16L1 complex.

The protein localises to the cytoplasm. Its subcellular location is the preautophagosomal structure membrane. It localises to the endosome membrane. It is found in the lysosome membrane. In terms of biological role, plays an essential role in both canonical and non-canonical autophagy: interacts with ATG12-ATG5 to mediate the lipidation to ATG8 family proteins (MAP1LC3A, MAP1LC3B, MAP1LC3C, GABARAPL1, GABARAPL2 and GABARAP). Acts as a molecular hub, coordinating autophagy pathways via distinct domains that support either canonical or non-canonical signaling. During canonical autophagy, interacts with ATG12-ATG5 to mediate the conjugation of phosphatidylethanolamine (PE) to ATG8 proteins, to produce a membrane-bound activated form of ATG8. Thereby, controls the elongation of the nascent autophagosomal membrane. As part of the ATG8 conjugation system with ATG5 and ATG12, required for recruitment of LRRK2 to stressed lysosomes and induction of LRRK2 kinase activity in response to lysosomal stress. Also involved in non-canonical autophagy, a parallel pathway involving conjugation of ATG8 proteins to single membranes at endolysosomal compartments, probably by catalyzing conjugation of phosphatidylserine (PS) to ATG8. Non-canonical autophagy plays a key role in epithelial cells to limit lethal infection by influenza A (IAV) virus. Regulates mitochondrial antiviral signaling (MAVS)-dependent type I interferon (IFN-I) production. Negatively regulates NOD1- and NOD2-driven inflammatory cytokine response. Instead, promotes an autophagy-dependent antibacterial pathway together with NOD1 or NOD2. Plays a role in regulating morphology and function of Paneth cell. The protein is Autophagy-related protein 16-1 of Pongo abelii (Sumatran orangutan).